The sequence spans 1489 residues: Ras GTPase-activating-like protein rng2 (1489 aa).

The region spanning 41 to 147 (LCRVDEAKKW…YCIHALSYFL (107 aa)) is the Calponin-homology (CH) domain. 6 IQ domains span residues 359–388 (QSSS…AYDE), 389–418 (LVNW…QEEA), 418–449 (ATKS…DLFT), 535–564 (ELDN…KLKA), 565–594 (STSS…SFQK), and 655–684 (FIPE…NFHK). A coiled-coil region spans residues 734–770 (EEEVLLEKMRKEIVQQVRDNEEIEVHINELDVKIALL). Residues 870 to 1110 (VLLLRFISQV…QDTMLMLERL (241 aa)) enclose the Ras-GAP domain. Positions 1330–1364 (QSLLNLREKRAFLDSQLKSYNEYIEQAMETLQSKK) form a coiled coil.

Interacts with calmodulin cam1.

It is found in the cytoplasm. The protein resides in the cytoskeleton. The protein localises to the nucleus envelope. It localises to the microtubule organizing center. Its subcellular location is the spindle pole body. Its function is as follows. Component of the contractile F-actin ring; required for its construction following assembly of F-actin at the division site. The polypeptide is Ras GTPase-activating-like protein rng2 (Schizosaccharomyces pombe (strain 972 / ATCC 24843) (Fission yeast)).